Consider the following 130-residue polypeptide: Glycine cleavage system H protein (130 aa).

One can recognise a Lipoyl-binding domain in the interval 24-106 (TATVGITDFA…YGDGWMFKVK (83 aa)). Residue Lys-65 is modified to N6-lipoyllysine.

It belongs to the GcvH family. In terms of assembly, the glycine cleavage system is composed of four proteins: P, T, L and H. (R)-lipoate serves as cofactor.

Its function is as follows. The glycine cleavage system catalyzes the degradation of glycine. The H protein shuttles the methylamine group of glycine from the P protein to the T protein. The chain is Glycine cleavage system H protein from Marinobacter nauticus (strain ATCC 700491 / DSM 11845 / VT8) (Marinobacter aquaeolei).